We begin with the raw amino-acid sequence, 891 residues long: Valine--tRNA ligase (891 aa).

Positions 43 to 53 (PFTSGTLHLGH) match the 'HIGH' region motif. The 'KMSKS' region signature appears at 536-540 (KMSKS). K539 is a binding site for ATP.

It belongs to the class-I aminoacyl-tRNA synthetase family. ValS type 2 subfamily.

It localises to the cytoplasm. It carries out the reaction tRNA(Val) + L-valine + ATP = L-valyl-tRNA(Val) + AMP + diphosphate. Functionally, catalyzes the attachment of valine to tRNA(Val). As ValRS can inadvertently accommodate and process structurally similar amino acids such as threonine, to avoid such errors, it has a 'posttransfer' editing activity that hydrolyzes mischarged Thr-tRNA(Val) in a tRNA-dependent manner. The chain is Valine--tRNA ligase from Pyrococcus horikoshii (strain ATCC 700860 / DSM 12428 / JCM 9974 / NBRC 100139 / OT-3).